We begin with the raw amino-acid sequence, 198 residues long: Probable host range protein 2 (198 aa).

The segment at 171-198 is disordered; sequence SDDDDDNDNADDDEEDDDEVNDIEDDYE.

Belongs to the poxviridae C7 protein family.

Plays a role for multiplication of the virus in different cell types. This is Probable host range protein 2 from Bos taurus (Bovine).